Here is a 101-residue protein sequence, read N- to C-terminus: Putative pterin-4-alpha-carbinolamine dehydratase (101 aa).

The protein belongs to the pterin-4-alpha-carbinolamine dehydratase family.

The catalysed reaction is (4aS,6R)-4a-hydroxy-L-erythro-5,6,7,8-tetrahydrobiopterin = (6R)-L-erythro-6,7-dihydrobiopterin + H2O. The sequence is that of Putative pterin-4-alpha-carbinolamine dehydratase from Rhodopseudomonas palustris (strain BisA53).